The chain runs to 227 residues: MSNKIVITVDGPSGAGKGTLCYALAEKLGFTLLDSGAIYRVTALAALKSAVELDDEIALAALASALDVQFLPADGEVKILLNGENVSGQIRTQEVAEAASKVAVFPEVRKALLQRQQDFSTENGLIADGRDMGTVVFPNAQVKLFLDASAEERAKRRYKQLQNKGISGNFDQILAEIKARDFRDRNRAVAPLKPAEDALILDSTSLSIEEVIAQALSYIQQHLDIKA.

Gly-11 to Thr-19 lines the ATP pocket.

The protein belongs to the cytidylate kinase family. Type 1 subfamily.

The protein localises to the cytoplasm. The catalysed reaction is CMP + ATP = CDP + ADP. It carries out the reaction dCMP + ATP = dCDP + ADP. The protein is Cytidylate kinase of Pasteurella multocida (strain Pm70).